Here is a 162-residue protein sequence, read N- to C-terminus: Cytochrome c-type biogenesis protein CcmE (162 aa).

At Met1 to Arg13 the chain is on the cytoplasmic side. A helical; Signal-anchor for type II membrane protein membrane pass occupies residues Leu14 to Gly34. Residues Leu35 to Pro162 lie on the Periplasmic side of the membrane. Residues His128 and Tyr132 each coordinate heme. Positions Ala140–Gly151 are enriched in basic and acidic residues. Positions Ala140 to Pro162 are disordered.

Belongs to the CcmE/CycJ family.

It is found in the cell inner membrane. Heme chaperone required for the biogenesis of c-type cytochromes. Transiently binds heme delivered by CcmC and transfers the heme to apo-cytochromes in a process facilitated by CcmF and CcmH. The chain is Cytochrome c-type biogenesis protein CcmE from Caulobacter vibrioides (strain ATCC 19089 / CIP 103742 / CB 15) (Caulobacter crescentus).